A 291-amino-acid polypeptide reads, in one-letter code: m-AAA protease-interacting protein 1, mitochondrial (291 aa).

The N-terminal 96 residues, 1–96 (MALAARLLPL…SLPASPIRSY (96 aa)), are a transit peptide targeting the mitochondrion.

Interacts with AFG3L2. Interacts with SPG7. Interacts with SMDT1/EMRE (via the N-terminal transit peptide); interaction is direct and takes place before maturation of SMDT1/EMRE.

Its subcellular location is the mitochondrion matrix. Promotes sorting of SMDT1/EMRE in mitochondria by ensuring its maturation. Interacts with the transit peptide region of SMDT1/EMRE precursor protein in the mitochondrial matrix, leading to protect it against protein degradation by YME1L1, thereby ensuring SMDT1/EMRE maturation by the mitochondrial processing peptidase (PMPCA and PMPCB). This Rattus norvegicus (Rat) protein is m-AAA protease-interacting protein 1, mitochondrial.